A 248-amino-acid chain; its full sequence is Type II methyltransferase M.AquIA (248 aa).

In terms of domain architecture, SAM-dependent MTase C5-type spans 3–248 (KKLISLFSGA…IKDRIKNHGY (246 aa)). Residue C82 is part of the active site.

Belongs to the class I-like SAM-binding methyltransferase superfamily. C5-methyltransferase family. Heterodimer of an alpha and a beta subunit.

It carries out the reaction a 2'-deoxycytidine in DNA + S-adenosyl-L-methionine = a 5-methyl-2'-deoxycytidine in DNA + S-adenosyl-L-homocysteine + H(+). Functionally, a methylase, recognizes the double-stranded sequence 5'-CYCGRG-3', methylates C-1 on both strands, and protects the DNA from cleavage by the AquI endonuclease. This Picosynechococcus sp. (strain ATCC 27264 / PCC 7002 / PR-6) (Agmenellum quadruplicatum) protein is Type II methyltransferase M.AquIA (aquIMA).